The chain runs to 237 residues: Phosphoadenosine 5'-phosphosulfate reductase (237 aa).

Catalysis depends on cysteine 231, which acts as the Nucleophile; cysteine thiosulfonate intermediate.

The protein belongs to the PAPS reductase family. CysH subfamily.

It is found in the cytoplasm. The enzyme catalyses [thioredoxin]-disulfide + sulfite + adenosine 3',5'-bisphosphate + 2 H(+) = [thioredoxin]-dithiol + 3'-phosphoadenylyl sulfate. It functions in the pathway sulfur metabolism; hydrogen sulfide biosynthesis; sulfite from sulfate: step 3/3. Its function is as follows. Catalyzes the formation of sulfite from phosphoadenosine 5'-phosphosulfate (PAPS) using thioredoxin as an electron donor. The chain is Phosphoadenosine 5'-phosphosulfate reductase from Xylella fastidiosa (strain M23).